We begin with the raw amino-acid sequence, 830 residues long: WD repeat-containing protein 75 (830 aa).

9 WD repeats span residues 4-42 (EGVRVVRCGGSRLNFRRAVFSVDSKYIFCVSGDFVKVYS), 46-85 (EECVHILHGHTDLVSGILVNPSNHLQLYSCSFDGTIKLWD), 89-130 (GILI…QLVS), 144-183 (RQLTFVLDYINRSPKCIAFGNEGEYVAAVRDFYLSVYFFK), 192-230 (LPSTKNKKNAKNKFTCVACHPKEDCIASGHMDGKIRLWR), 236-275 (QKYTYTCLHWHHDMVMDLAFTVTGTSLLSGGRECVLVEWR), 278-317 (SEKNKEFLPRLGSSIEHISVSPAGDLFCTSHSDNKITVIH), 323-361 (SAVIQGLVKDRSISTGLMVDPRTKALVLNGKPGHLQFYS), and 375-422 (QQEY…KLWN). Residue Lys-426 forms a Glycyl lysine isopeptide (Lys-Gly) (interchain with G-Cter in SUMO2) linkage. WD repeat units lie at residues 429–473 (GFVL…KVWI), 486–524 (AWTCDFVGSYHKYQATNCCFSEDGSLLAVSFEEIVTIWD), 528–568 (WELK…CCWN), and 573–610 (SIQWSAKLNVRVMEPDPYSDHVAAVAQSSAGSDLFVFK). Phosphoserine is present on residues Ser-663 and Ser-671. Lys-675 is covalently cross-linked (Glycyl lysine isopeptide (Lys-Gly) (interchain with G-Cter in SUMO2)). The interval 761–807 (KSAEEVPDDVDMEGNKESDDSDEEYDLTEKDKETNNNTDLGEDAIHQ) is disordered. 2 positions are modified to phosphoserine: Ser-778 and Ser-781. Phosphotyrosine is present on Tyr-785. Position 811 is a phosphoserine (Ser-811).

As to quaternary structure, component of the proposed t-UTP subcomplex of the ribosomal small subunit (SSU) processome. SSU processome is composed of more than 70 proteins and the RNA chaperone small nucleolar RNA (snoRNA) U3.

The protein localises to the nucleus. It is found in the nucleolus. In terms of biological role, ribosome biogenesis factor. Part of the small subunit (SSU) processome, first precursor of the small eukaryotic ribosomal subunit. During the assembly of the SSU processome in the nucleolus, many ribosome biogenesis factors, an RNA chaperone and ribosomal proteins associate with the nascent pre-rRNA and work in concert to generate RNA folding, modifications, rearrangements and cleavage as well as targeted degradation of pre-ribosomal RNA by the RNA exosome. Involved in nucleolar processing of pre-18S ribosomal RNA. Required for optimal pre-ribosomal RNA transcription by RNA polymerase I. The sequence is that of WD repeat-containing protein 75 (Wdr75) from Mus musculus (Mouse).